Consider the following 776-residue polypeptide: Heat shock protein 110 (776 aa).

The tract at residues 741–776 (ILNKKKPAAPAPPKKEEPQPAAGDQPQSQPGEMDVD) is disordered.

The protein belongs to the heat shock protein 70 family.

This chain is Heat shock protein 110, found in Caenorhabditis elegans.